An 811-amino-acid polypeptide reads, in one-letter code: DNA mismatch repair protein MutS (811 aa).

Residue 583-590 participates in ATP binding; sequence GPNMAGKS.

The protein belongs to the DNA mismatch repair MutS family.

Functionally, this protein is involved in the repair of mismatches in DNA. It is possible that it carries out the mismatch recognition step. This protein has a weak ATPase activity. The protein is DNA mismatch repair protein MutS of Thermus thermophilus (strain ATCC BAA-163 / DSM 7039 / HB27).